Here is a 483-residue protein sequence, read N- to C-terminus: Glutamyl-tRNA(Gln) amidotransferase subunit A (483 aa).

Active-site charge relay system residues include K76 and S151. The active-site Acyl-ester intermediate is the S175.

Belongs to the amidase family. GatA subfamily. Heterotrimer of A, B and C subunits.

It carries out the reaction L-glutamyl-tRNA(Gln) + L-glutamine + ATP + H2O = L-glutaminyl-tRNA(Gln) + L-glutamate + ADP + phosphate + H(+). In terms of biological role, allows the formation of correctly charged Gln-tRNA(Gln) through the transamidation of misacylated Glu-tRNA(Gln) in organisms which lack glutaminyl-tRNA synthetase. The reaction takes place in the presence of glutamine and ATP through an activated gamma-phospho-Glu-tRNA(Gln). The protein is Glutamyl-tRNA(Gln) amidotransferase subunit A of Nitrosococcus oceani (strain ATCC 19707 / BCRC 17464 / JCM 30415 / NCIMB 11848 / C-107).